The sequence spans 275 residues: Dermonecrotic toxin SpaSicTox-betaIIA1 (275 aa).

Residue histidine 5 is part of the active site. 2 residues coordinate Mg(2+): glutamate 25 and aspartate 27. The active-site Nucleophile is the histidine 41. 2 disulfide bridges follow: cysteine 45-cysteine 51 and cysteine 47-cysteine 190. Aspartate 85 provides a ligand contact to Mg(2+).

This sequence belongs to the arthropod phospholipase D family. Class II subfamily. Requires Mg(2+) as cofactor. As to expression, expressed by the venom gland.

It localises to the secreted. The enzyme catalyses an N-(acyl)-sphingosylphosphocholine = an N-(acyl)-sphingosyl-1,3-cyclic phosphate + choline. The catalysed reaction is an N-(acyl)-sphingosylphosphoethanolamine = an N-(acyl)-sphingosyl-1,3-cyclic phosphate + ethanolamine. It carries out the reaction a 1-acyl-sn-glycero-3-phosphocholine = a 1-acyl-sn-glycero-2,3-cyclic phosphate + choline. It catalyses the reaction a 1-acyl-sn-glycero-3-phosphoethanolamine = a 1-acyl-sn-glycero-2,3-cyclic phosphate + ethanolamine. Dermonecrotic toxins cleave the phosphodiester linkage between the phosphate and headgroup of certain phospholipids (sphingolipid and lysolipid substrates), forming an alcohol (often choline) and a cyclic phosphate. This toxin acts on sphingomyelin (SM). It may also act on ceramide phosphoethanolamine (CPE), lysophosphatidylcholine (LPC) and lysophosphatidylethanolamine (LPE), but not on lysophosphatidylserine (LPS), and lysophosphatidylglycerol (LPG). It acts by transphosphatidylation, releasing exclusively cyclic phosphate products as second products. Induces dermonecrosis, hemolysis, increased vascular permeability, edema, inflammatory response, and platelet aggregation. This is Dermonecrotic toxin SpaSicTox-betaIIA1 from Sicarius patagonicus (Six-eyed sand spider).